A 148-amino-acid polypeptide reads, in one-letter code: Glutamate mutase sigma subunit 2 (148 aa).

Residues 1-134 (MRTVILGVIG…EALKADLGHR (134 aa)) enclose the B12-binding domain. Adenosylcob(III)alamin-binding positions include 11-15 (SDAHV), H14, 59-61 (SSL), and 90-94 (NLAVG). Residues 129-141 (ADLGHRSREEASS) show a composition bias toward basic and acidic residues. A disordered region spans residues 129 to 148 (ADLGHRSREEASSEKVQLGS).

This sequence belongs to the methylaspartate mutase GlmS subunit family. As to quaternary structure, heterotetramer composed of 2 epsilon subunits (GlmE) and 2 sigma subunits (GlmS). GlmE exists as a homodimer and GlmS as a monomer. The cofactor is adenosylcob(III)alamin.

The enzyme catalyses (2S,3S)-3-methyl-L-aspartate = L-glutamate. The protein operates within amino-acid degradation; L-glutamate degradation via mesaconate pathway; acetate and pyruvate from L-glutamate: step 1/4. Its function is as follows. Catalyzes the carbon skeleton rearrangement of L-glutamate to L-threo-3-methylaspartate ((2S,3S)-3-methylaspartate). This Haloarcula marismortui (strain ATCC 43049 / DSM 3752 / JCM 8966 / VKM B-1809) (Halobacterium marismortui) protein is Glutamate mutase sigma subunit 2.